An 822-amino-acid chain; its full sequence is Cadherin-3 (822 aa).

An N-terminal signal peptide occupies residues 1–25 (MELLSGPHAFLLLLLQVCWLRSVVS). The propeptide occupies 26-99 (EPYRAGFIGE…PTRILRRRKR (74 aa)). Cadherin domains are found at residues 100 to 207 (EWVM…KPKF), 208 to 320 (TQDT…APEF), 321 to 432 (EPQK…APVF), 433 to 538 (VPPS…DHGP), and 539 to 645 (IPEP…RPWK). Residues 100-647 (EWVMPPIFVP…NDCPRPWKGG (548 aa)) lie on the Extracellular side of the membrane. The N-linked (GlcNAc...) asparagine glycan is linked to asparagine 192. A glycan (N-linked (GlcNAc...) asparagine) is linked at asparagine 558. The helical transmembrane segment at 648–670 (FILPILGAVLALLTLLLALLLLV) threads the bilayer. Over 671–822 (RKKRKVKEPL…ADMYGGGEDD (152 aa)) the chain is Cytoplasmic.

In terms of assembly, interacts with CDCP1 and CTNNB1.

It is found in the cell membrane. Functionally, cadherins are calcium-dependent cell adhesion proteins. They preferentially interact with themselves in a homophilic manner in connecting cells; cadherins may thus contribute to the sorting of heterogeneous cell types. The protein is Cadherin-3 (Cdh3) of Mus musculus (Mouse).